The following is a 166-amino-acid chain: uncharacterized protein (166 aa).

Ala2 is subject to N-acetylalanine.

In terms of assembly, homodimer.

This is an uncharacterized protein from Arabidopsis thaliana (Mouse-ear cress).